A 309-amino-acid polypeptide reads, in one-letter code: Tagatose-6-phosphate kinase 1 (309 aa).

The protein belongs to the carbohydrate kinase PfkB family. LacC subfamily.

It catalyses the reaction D-tagatofuranose 6-phosphate + ATP = D-tagatofuranose 1,6-bisphosphate + ADP + H(+). It functions in the pathway carbohydrate metabolism; D-tagatose 6-phosphate degradation; D-glyceraldehyde 3-phosphate and glycerone phosphate from D-tagatose 6-phosphate: step 1/2. This chain is Tagatose-6-phosphate kinase 1, found in Streptococcus agalactiae serotype III (strain NEM316).